We begin with the raw amino-acid sequence, 360 residues long: Magnesium transporter NIPA2 (360 aa).

Topologically, residues 1–9 are extracellular; the sequence is MSQGHGKYD. A helical transmembrane segment spans residues 10–30; the sequence is FYIGLGLAMSSSIFIGGSFIL. Topologically, residues 31–56 are cytoplasmic; that stretch reads KKKGLLRLARKGSTRAGQGGHAYLKE. The chain crosses the membrane as a helical span at residues 57 to 77; sequence WLWWAGLLSMGAGEVANFAAY. A78 is a topological domain (extracellular). A helical transmembrane segment spans residues 79–99; it reads FAPATLVTPLGALSVLVSAIL. At 100 to 107 the chain is on the cytoplasmic side; that stretch reads SSYFLNER. A helical transmembrane segment spans residues 108 to 128; sequence LNLHGKIGCLLSILGSTVMVI. Residues 129–149 are Extracellular-facing; it reads HAPKEEEIETLNEMSHKLGDP. The chain crosses the membrane as a helical span at residues 150–170; the sequence is GFVVFATLVVIVSLILIFVVG. At 171-175 the chain is on the cytoplasmic side; the sequence is PRHGQ. A helical transmembrane segment spans residues 176 to 196; it reads TNILVYITICSVIGAVSVSCA. Residues 197–215 are Extracellular-facing; it reads KGLGIAIKELFAGKPVLQH. A helical membrane pass occupies residues 216–236; that stretch reads PLTWILLLSLIVCVSTQINYL. Topologically, residues 237–246 are cytoplasmic; sequence NRALDIFNTS. The helical transmembrane segment at 247 to 267 threads the bilayer; the sequence is IVTPIYYVFFTTSVITCSAIL. Residues 268 to 278 are Extracellular-facing; that stretch reads FKEWQDMPVDD. A helical membrane pass occupies residues 279 to 299; that stretch reads VIGTLSGFFTIIVGIFLLHAF. Residues 300 to 360 are Cytoplasmic-facing; the sequence is KDVSFSLSSL…SRRNGNLTAF (61 aa).

The protein belongs to the NIPA family.

It localises to the cell membrane. Its subcellular location is the early endosome. It catalyses the reaction Mg(2+)(in) = Mg(2+)(out). Acts as a selective Mg(2+) transporter. The sequence is that of Magnesium transporter NIPA2 (NIPA2) from Bos taurus (Bovine).